The chain runs to 352 residues: Outer membrane protein assembly factor BamC (352 aa).

The first 19 residues, 1 to 19 (MQYWIPKALAVSVLVSLSG), serve as a signal peptide directing secretion. Cysteine 20 is lipidated: N-palmitoyl cysteine. The S-diacylglycerol cysteine moiety is linked to residue cysteine 20.

Belongs to the BamC family. As to quaternary structure, part of the Bam complex.

The protein resides in the cell outer membrane. Its function is as follows. Part of the outer membrane protein assembly complex, which is involved in assembly and insertion of beta-barrel proteins into the outer membrane. The sequence is that of Outer membrane protein assembly factor BamC from Pseudoalteromonas sp. (strain SM9913).